A 399-amino-acid chain; its full sequence is Tryptophan synthase beta chain (399 aa).

An N6-(pyridoxal phosphate)lysine modification is found at Lys-92.

Belongs to the TrpB family. As to quaternary structure, tetramer of two alpha and two beta chains. Requires pyridoxal 5'-phosphate as cofactor.

It catalyses the reaction (1S,2R)-1-C-(indol-3-yl)glycerol 3-phosphate + L-serine = D-glyceraldehyde 3-phosphate + L-tryptophan + H2O. The protein operates within amino-acid biosynthesis; L-tryptophan biosynthesis; L-tryptophan from chorismate: step 5/5. The beta subunit is responsible for the synthesis of L-tryptophan from indole and L-serine. In Exiguobacterium sibiricum (strain DSM 17290 / CCUG 55495 / CIP 109462 / JCM 13490 / 255-15), this protein is Tryptophan synthase beta chain.